Reading from the N-terminus, the 392-residue chain is Phosphoglycerate kinase (392 aa).

Substrate is bound by residues 19–21, Arg35, 58–61, Arg117, and Arg150; these read DFN and HMGR. ATP is bound by residues Lys201, Glu323, and 349–352; that span reads GGDS.

The protein belongs to the phosphoglycerate kinase family. As to quaternary structure, monomer.

It is found in the cytoplasm. The enzyme catalyses (2R)-3-phosphoglycerate + ATP = (2R)-3-phospho-glyceroyl phosphate + ADP. It participates in carbohydrate degradation; glycolysis; pyruvate from D-glyceraldehyde 3-phosphate: step 2/5. The polypeptide is Phosphoglycerate kinase (Desulfotalea psychrophila (strain LSv54 / DSM 12343)).